The following is a 503-amino-acid chain: Zinc-regulated transporter 3 (503 aa).

3 helical membrane passes run 8–28 (LLFS…VPLL), 42–62 (LVNY…LYML), and 75–95 (FPGL…VHAF). Positions 112-171 (GSHIHSKSHSHSHSHSHADSHSNFSNDHDLENAPSEHGYATSSSSVSENDPLITKDSDRP) are disordered. Residues 115-126 (IHSKSHSHSHSH) are compositionally biased toward basic residues. The segment covering 127-142 (SHADSHSNFSNDHDLE) has biased composition (basic and acidic residues). Phosphoserine is present on residues S178 and S188. Disordered regions lie at residues 221 to 244 (QSER…DKDH) and 274 to 295 (HHSS…FSSP). Residues 280–295 (PENYGSNQLSHSFSSP) are compositionally biased toward polar residues. The next 5 helical transmembrane spans lie at 336–356 (IGMQ…FIIF), 371–391 (IFLS…LPFY), 398–418 (WVAI…GALI), 438–458 (LLSV…QTGI), and 482–502 (GTTC…SALF).

Belongs to the ZIP transporter (TC 2.A.5) family.

It localises to the vacuole membrane. Functionally, transports zinc from storage in the vacuole to the cytoplasm. This Saccharomyces cerevisiae (strain ATCC 204508 / S288c) (Baker's yeast) protein is Zinc-regulated transporter 3 (ZRT3).